A 1378-amino-acid chain; its full sequence is S-cell enriched with leucine-rich repeat-containing protein slrA (1378 aa).

The helical transmembrane segment at 17–37 threads the bilayer; that stretch reads IFKILYCYLFTSLLLILSTWV. Residues asparagine 59, asparagine 112, asparagine 143, asparagine 172, and asparagine 201 are each glycosylated (N-linked (GlcNAc...) asparagine). LRR repeat units lie at residues 143 to 165, 167 to 188, 191 to 212, 213 to 235, 236 to 257, 260 to 281, 282 to 304, 307 to 329, and 331 to 353; these read NLTG…LPYL, HLRN…GLLK, SLVA…ADSK, AISY…WKTP, NLLF…EFFR, SLDY…LSKS, RISY…TCWK, SLRI…IFDH, and PLQY…LDCA. Residues asparagine 265, asparagine 287, and asparagine 296 are each glycosylated (N-linked (GlcNAc...) asparagine). N-linked (GlcNAc...) asparagine glycans are attached at residues asparagine 416, asparagine 436, asparagine 451, asparagine 491, asparagine 513, asparagine 596, asparagine 605, asparagine 634, asparagine 704, asparagine 710, asparagine 740, asparagine 741, asparagine 771, asparagine 788, asparagine 801, asparagine 826, asparagine 843, asparagine 861, asparagine 875, and asparagine 907. Positions 886 to 946 form a coiled coil; sequence SLNNNNNNNN…NNNENNNENK (61 aa). Over residues 891–909 the composition is skewed to low complexity; sequence NNNNNNNNNKNNNNNNNDS. Positions 891–945 are disordered; sequence NNNNNNNNNKNNNNNNNDSNNEKEVVEDEEEDLDYSSQNDNNNINNNNNENNNEN. The span at 915 to 924 shows a compositional bias: acidic residues; that stretch reads VVEDEEEDLD. Residues 929–945 show a composition bias toward low complexity; that stretch reads NDNNNINNNNNENNNEN. N-linked (GlcNAc...) asparagine glycosylation is found at asparagine 953, asparagine 970, asparagine 1090, and asparagine 1100. The helical transmembrane segment at 1160 to 1180 threads the bilayer; that stretch reads YYIVFFGCASGLILVLVICIV. Over residues 1227–1276 the composition is skewed to low complexity; it reads DLNNNNNNNNNNNNNNNNNNNNNNNNNNNNNNNNNFNDGSDTFNNNNKKN. The tract at residues 1227–1378 is disordered; that stretch reads DLNNNNNNNN…KKHLTIINKK (152 aa). Over residues 1289-1304 the composition is skewed to basic and acidic residues; sequence DGKENDIKNINNKKDE. Positions 1305-1324 are enriched in acidic residues; the sequence is KEDDGDDDDDEDDDEYEDDT. A compositionally biased stretch (low complexity) spans 1328–1353; it reads SSGNSSRSKGSDGGSSSNSLSSDKQS. N-linked (GlcNAc...) asparagine glycans are attached at residues asparagine 1331 and asparagine 1360. Residues 1354-1364 are compositionally biased toward polar residues; it reads FNNGNENNSII. Positions 1368-1378 are enriched in basic residues; it reads KKKHLTIINKK.

The protein localises to the membrane. This is S-cell enriched with leucine-rich repeat-containing protein slrA (slrA) from Dictyostelium discoideum (Social amoeba).